We begin with the raw amino-acid sequence, 173 residues long: N-alpha-acetyltransferase 20 (173 aa).

The 150-residue stretch at threonine 2–proline 151 folds into the N-acetyltransferase domain.

It belongs to the acetyltransferase family. ARD1 subfamily.

Its function is as follows. Seems to be involved in N-acetylation. The polypeptide is N-alpha-acetyltransferase 20 (nat5) (Dictyostelium discoideum (Social amoeba)).